The primary structure comprises 584 residues: Proline--tRNA ligase (584 aa).

The tract at residues 242 to 261 is disordered; sequence APPASNPEERPATQVHDTPD.

The protein belongs to the class-II aminoacyl-tRNA synthetase family. ProS type 1 subfamily. As to quaternary structure, homodimer.

It localises to the cytoplasm. The enzyme catalyses tRNA(Pro) + L-proline + ATP = L-prolyl-tRNA(Pro) + AMP + diphosphate. Catalyzes the attachment of proline to tRNA(Pro) in a two-step reaction: proline is first activated by ATP to form Pro-AMP and then transferred to the acceptor end of tRNA(Pro). As ProRS can inadvertently accommodate and process non-cognate amino acids such as alanine and cysteine, to avoid such errors it has two additional distinct editing activities against alanine. One activity is designated as 'pretransfer' editing and involves the tRNA(Pro)-independent hydrolysis of activated Ala-AMP. The other activity is designated 'posttransfer' editing and involves deacylation of mischarged Ala-tRNA(Pro). The misacylated Cys-tRNA(Pro) is not edited by ProRS. The sequence is that of Proline--tRNA ligase from Salinispora arenicola (strain CNS-205).